The following is a 369-amino-acid chain: MAASLPLVFTAPKRGMPPRHLADLDSAERKEAVKELGLPAFRADQLARQYYARLEADPEKMTDLPASVREKVGESLFPTLLTPIKHLACDSGDTRKTLWKAHDGTLLESVLMRYPDRATLCISSQAGCGMACPFCATGQGGLDRNLSTAEIVDQVREAAAAMRDGDVAGGPGRLSNVVFMGMGEPLANYKRVVAAVRRITSPAPDGLGLSQRSVTVSTVGLAPAIRKLADEGLSVTLAVSLHTPDDELRDTLVPVNNRWSVSEVLQAARYYADKTGRRVSIEYAMIKNVNDQPWRADMLGKKLKKALGGLVHVNLIPLNPTPGSEWDASPKDVEREFVRRVIAQGVSCTVRDTRGQEIAAACGQLAAEN.

The active-site Proton acceptor is the E108. One can recognise a Radical SAM core domain in the interval Y114–R351. A disulfide bridge connects residues C121 and C362. [4Fe-4S] cluster-binding residues include C128, C132, and C135. Residues G183–E184, S217, S240–H242, and N319 each bind S-adenosyl-L-methionine. C362 functions as the S-methylcysteine intermediate in the catalytic mechanism.

Belongs to the radical SAM superfamily. RlmN family. Requires [4Fe-4S] cluster as cofactor.

It localises to the cytoplasm. It carries out the reaction adenosine(2503) in 23S rRNA + 2 reduced [2Fe-2S]-[ferredoxin] + 2 S-adenosyl-L-methionine = 2-methyladenosine(2503) in 23S rRNA + 5'-deoxyadenosine + L-methionine + 2 oxidized [2Fe-2S]-[ferredoxin] + S-adenosyl-L-homocysteine. The enzyme catalyses adenosine(37) in tRNA + 2 reduced [2Fe-2S]-[ferredoxin] + 2 S-adenosyl-L-methionine = 2-methyladenosine(37) in tRNA + 5'-deoxyadenosine + L-methionine + 2 oxidized [2Fe-2S]-[ferredoxin] + S-adenosyl-L-homocysteine. Specifically methylates position 2 of adenine 2503 in 23S rRNA and position 2 of adenine 37 in tRNAs. This is Probable dual-specificity RNA methyltransferase RlmN from Rhodococcus erythropolis (strain PR4 / NBRC 100887).